We begin with the raw amino-acid sequence, 221 residues long: Probable septum site-determining protein MinC (221 aa).

Belongs to the MinC family. In terms of assembly, interacts with MinD and FtsZ.

Functionally, cell division inhibitor that blocks the formation of polar Z ring septums. Rapidly oscillates between the poles of the cell to destabilize FtsZ filaments that have formed before they mature into polar Z rings. Prevents FtsZ polymerization. The protein is Probable septum site-determining protein MinC of Shewanella baltica (strain OS223).